A 100-amino-acid chain; its full sequence is Replication restart protein PriB (100 aa).

The SSB domain maps to 1–100 (MTNRMELSGT…VLHADDIIHI (100 aa)).

This sequence belongs to the PriB family. As to quaternary structure, homodimer. Interacts with PriA and DnaT. Component of the replication restart primosome. Primosome assembly occurs via a 'hand-off' mechanism. PriA binds to replication forks, subsequently PriB then DnaT bind; DnaT then displaces ssDNA to generate the helicase loading substrate.

Involved in the restart of stalled replication forks, which reloads the replicative helicase on sites other than the origin of replication; the PriA-PriB pathway is the major replication restart pathway. During primosome assembly it facilitates complex formation between PriA and DnaT on DNA; stabilizes PriA on DNA. Stimulates the DNA unwinding activity of PriA helicase. The protein is Replication restart protein PriB of Vibrio vulnificus (strain CMCP6).